Here is a 372-residue protein sequence, read N- to C-terminus: Cobalt-precorrin-5B C(1)-methyltransferase (372 aa).

This sequence belongs to the CbiD family.

The catalysed reaction is Co-precorrin-5B + S-adenosyl-L-methionine = Co-precorrin-6A + S-adenosyl-L-homocysteine. It functions in the pathway cofactor biosynthesis; adenosylcobalamin biosynthesis; cob(II)yrinate a,c-diamide from sirohydrochlorin (anaerobic route): step 6/10. In terms of biological role, catalyzes the methylation of C-1 in cobalt-precorrin-5B to form cobalt-precorrin-6A. This Geobacillus thermodenitrificans (strain NG80-2) protein is Cobalt-precorrin-5B C(1)-methyltransferase.